The chain runs to 142 residues: MFRNIQKRNISSSGRVLLNHGKPQNPVYNAELTMKIEPIQRTGESIDVKRARLVYQSRKRGILESDLLLSRFAKRYLSGFSQEELDEYDKLLDEPDWDIYYWATKNYDVTPLPDKWKNSKILKLLQEDAENKEKEILRMPEL.

Belongs to the SDHAF2 family. As to quaternary structure, interacts with the flavoprotein subunit within the SDH catalytic dimer.

It is found in the mitochondrion matrix. Functionally, plays an essential role in the assembly of succinate dehydrogenase (SDH), an enzyme complex (also referred to as respiratory complex II) that is a component of both the tricarboxylic acid (TCA) cycle and the mitochondrial electron transport chain, and which couples the oxidation of succinate to fumarate with the reduction of ubiquinone (coenzyme Q) to ubiquinol. Required for flavinylation (covalent attachment of FAD) of the flavoprotein subunit of the SDH catalytic dimer. The sequence is that of Succinate dehydrogenase assembly factor 2, mitochondrial from Debaryomyces hansenii (strain ATCC 36239 / CBS 767 / BCRC 21394 / JCM 1990 / NBRC 0083 / IGC 2968) (Yeast).